A 323-amino-acid polypeptide reads, in one-letter code: Calcium homeostasis modulator protein 2 (323 aa).

Residues 1-21 are Cytoplasmic-facing; sequence MAALIAENFRFLSLFFKSKDV. The interval 14-39 is central pore; it reads LFFKSKDVMIFNGLVALGTVGSQELF. The helical transmembrane segment at 22–43 threads the bilayer; that stretch reads MIFNGLVALGTVGSQELFSVVA. Over 44–52 the chain is Extracellular; that stretch reads FHCPCSPAR. 2 cysteine pairs are disulfide-bonded: Cys46–Cys130 and Cys48–Cys162. The helical transmembrane segment at 53 to 76 threads the bilayer; sequence NYLYGLTAIGVPALALFLIGVILN. Residues 77–101 lie on the Cytoplasmic side of the membrane; the sequence is NHTWNLVAECQYRRAKNCSAAPTFL. Residues 102 to 132 form a helical membrane-spanning segment; it reads LLSSILGRAAVAPVTWSVISLLRGEAYVCAL. Topologically, residues 133-179 are extracellular; it reads SEFVDPSSLTAGDEGFPPDHATEILARFPCGEGPANLSGFREEVSRR. The tract at residues 145-152 is hemichannel docking; sequence DEGFPPDH. A helical membrane pass occupies residues 180–206; that stretch reads LKYESQLFGWLLIGVVAILVFLTKCFK. The Cytoplasmic portion of the chain corresponds to 207–323; that stretch reads HYCSPLSYRQ…DNVEMALLTV (117 aa). The intersubunit interaction stretch occupies residues 214–251; the sequence is YRQEAYWAQYRTNEDQLFQRTAEVHSRVLAANNVRRFF.

Belongs to the CALHM family. In terms of assembly, homo-undecamer. Two undecameric hemichannels can assemble in a head-to-head manner to form a gap junction.

It localises to the cell membrane. The catalysed reaction is ATP(in) = ATP(out). Pore-forming subunit of Ca(2+) homeostasis modulator channels. Mediates ATP release from astrocytes and ATP-induced Ca(2+) influx in microglia thus regulating neuronal ATP and Ca(2+) homeostasis, synaptic transmission and neuroinflammatory response. May form intercellular gap junctions. The gating mechanism remains unknown. The sequence is that of Calcium homeostasis modulator protein 2 (Calhm2) from Rattus norvegicus (Rat).